Here is a 29-residue protein sequence, read N- to C-terminus: Mycofactocin precursor peptide (29 aa).

Belongs to the mycofactocin precursor peptide family. Post-translationally, the post-translational modifications that lead to mycofactocin involve oxidative decarboxylation of the C-terminal tyrosine residue catalyzed by MftC, introduction of a tyramine-valine cross-link, removal of the modified C-terminal dipeptide by MftE. The released dipeptide then undergoes oxidative deamination by MftD, glycosylation by MftF and methylation by an unknown enzyme.

Its function is as follows. Precursor peptide that leads to mycofactocin (MFT) after extensive post-translational modifications by enzymes encoded by adjacent genes. Mycofactocin acts as a redox cofactor of nicotinamide-dependent oxidoreductases encoded in the same locus. This chain is Mycofactocin precursor peptide, found in Mycobacterium tuberculosis (strain ATCC 25618 / H37Rv).